A 347-amino-acid polypeptide reads, in one-letter code: DNA-directed RNA polymerase subunit alpha (347 aa).

The alpha N-terminal domain (alpha-NTD) stretch occupies residues 1–243; that stretch reads MLIKQGDRLI…DQISVFINFD (243 aa). Residues 260–347 form an alpha C-terminal domain (alpha-CTD) region; that stretch reads FNEHLFKSID…EWKRKQQHEA (88 aa).

This sequence belongs to the RNA polymerase alpha chain family. As to quaternary structure, homodimer. The RNAP catalytic core consists of 2 alpha, 1 beta, 1 beta' and 1 omega subunit. When a sigma factor is associated with the core the holoenzyme is formed, which can initiate transcription.

It catalyses the reaction RNA(n) + a ribonucleoside 5'-triphosphate = RNA(n+1) + diphosphate. Functionally, DNA-dependent RNA polymerase catalyzes the transcription of DNA into RNA using the four ribonucleoside triphosphates as substrates. In Nitratidesulfovibrio vulgaris (strain ATCC 29579 / DSM 644 / CCUG 34227 / NCIMB 8303 / VKM B-1760 / Hildenborough) (Desulfovibrio vulgaris), this protein is DNA-directed RNA polymerase subunit alpha.